Reading from the N-terminus, the 316-residue chain is Large ribosomal subunit protein uL4 (316 aa).

The interval M1 to D211 is large ribosomal subunit protein uL4. Disordered stretches follow at residues A44–G76 and E231–D316. The span at G60–G71 shows a compositional bias: basic residues. The interval A212–D316 is unknown. Positions Q255–Q270 are enriched in low complexity. 2 stretches are compositionally biased toward acidic residues: residues E281–E291 and T301–D316.

Belongs to the universal ribosomal protein uL4 family. Part of the 50S ribosomal subunit.

Its function is as follows. One of the primary rRNA binding proteins, this protein initially binds near the 5'-end of the 23S rRNA. It is important during the early stages of 50S assembly. It makes multiple contacts with different domains of the 23S rRNA in the assembled 50S subunit and ribosome. In terms of biological role, forms part of the polypeptide exit tunnel. This chain is Large ribosomal subunit protein uL4, found in Synechococcus sp. (strain JA-2-3B'a(2-13)) (Cyanobacteria bacterium Yellowstone B-Prime).